Here is a 279-residue protein sequence, read N- to C-terminus: DegV domain-containing protein lmo1863 (279 aa).

A DegV domain is found at 4 to 278 (IKIITDSTAG…TGAFAFMYYT (275 aa)). Hexadecanoate is bound by residues Ser-62 and Ser-94.

Functionally, may bind long-chain fatty acids, such as palmitate, and may play a role in lipid transport or fatty acid metabolism. The chain is DegV domain-containing protein lmo1863 from Listeria monocytogenes serovar 1/2a (strain ATCC BAA-679 / EGD-e).